We begin with the raw amino-acid sequence, 366 residues long: MFSLPRGFEPPAPEDLGRQSSAELRERLRRQERLLRNEKFICKLPDKGKKISDTVAKLKAAISEREEVRGRSELFHPVSVDCKLRQKATTRADTDVDKAQSSDLMLDTSSLDPDCSSIDIKSSKSTSETQGPTHLTHRGNEETLEAGYTVNSSPAAHIRARAPSSEVKEHLPQHSVSSQEEEISSSIDSLFITKLQKITIADQSEPSEENTSTENFPELQSETPKKPHYMKVLEMRARNPVPPPHKFKTNVLPTQQSDSPSHCQRGQSPASSEEQRRRARQHLDDITAARLLPLHHLPAQLLSIEESLALQREQKQNYEEMQAKLAAQKLAERLNIKMQSYNPEGESSGRYREVRDEADAQSSDEC.

Residues 1 to 23 (MFSLPRGFEPPAPEDLGRQSSAE) form a disordered region. A coiled-coil region spans residues 15–39 (DLGRQSSAELRERLRRQERLLRNEK). The interval 29–68 (RRQERLLRNEKFICKLPDKGKKISDTVAKLKAAISEREEV) is important for transcription repressor activity. 4 disordered regions span residues 88 to 140 (ATTR…HRGN), 158 to 182 (IRAR…QEEE), 201 to 225 (ADQS…ETPK), and 237 to 280 (ARNP…RRAR). Over residues 90–100 (TRADTDVDKAQ) the composition is skewed to basic and acidic residues. Residues 101-127 (SSDLMLDTSSLDPDCSSIDIKSSKSTS) show a composition bias toward low complexity. The interaction with Pol II stretch occupies residues 225 to 296 (KKPHYMKVLE…TAARLLPLHH (72 aa)). Positions 251-272 (VLPTQQSDSPSHCQRGQSPASS) are enriched in polar residues. Position 268 is a phosphoserine (Ser268). An important for transcription repressor activity region spans residues 297 to 312 (LPAQLLSIEESLALQR). A coiled-coil region spans residues 299 to 333 (AQLLSIEESLALQREQKQNYEEMQAKLAAQKLAER). Positions 313 to 338 (EQKQNYEEMQAKLAAQKLAERLNIKM) are interaction with Pol II. The segment at 338–366 (MQSYNPEGESSGRYREVRDEADAQSSDEC) is disordered. Over residues 347–358 (SSGRYREVRDEA) the composition is skewed to basic and acidic residues.

The protein belongs to the GRINL1 family. As to quaternary structure, component of the Pol II(G) complex, which contains the RNA polymerase II (Pol II) core complex subunits and POLR2M isoform 1. Pol II(G) appears to be an abundant form of Pol II. Dephosphorylated at Ser-268 by the PNUTS-PP1 complex, promoting RNA polymerase II transcription pause-release.

The protein localises to the nucleus. Functionally, appears to be a stable component of the Pol II(G) complex form of RNA polymerase II (Pol II). Pol II synthesizes mRNA precursors and many functional non-coding RNAs and is the central component of the basal RNA polymerase II transcription machinery. May play a role in the Mediator complex-dependent regulation of transcription activation. Acts as a negative regulator of transcriptional activation; this repression is relieved by the Mediator complex, which restores Pol II(G) activator-dependent transcription to a level equivalent to that of Pol II. This Mus musculus (Mouse) protein is DNA-directed RNA polymerase II subunit GRINL1A (Polr2m).